We begin with the raw amino-acid sequence, 367 residues long: F-box only protein 25 (367 aa).

The interval 1–83 (MPFLGQDWRS…NDTNTQSFYR (83 aa)) is interaction with beta-actin. In terms of domain architecture, F-box spans 226–274 (LTLSDLPLHMLNNILYRFSDGWDIITLGQVTPTLYMLSEDRQLWKKLCQ).

In terms of assembly, part of a SCF (SKP1-cullin-F-box) protein ligase complex consisting of FBXO25, SKP1, CUL1 and RBX1. Interacts directly with SKP1 and CUL1. Interacts (via C-terminus) with beta-actin (via N-terminus). Expressed in all brain tissue observed.

Its subcellular location is the nucleus. It functions in the pathway protein modification; protein ubiquitination. Substrate-recognition component of the SCF (SKP1-CUL1-F-box protein)-type E3 ubiquitin ligase complex. May play a role in accumulation of expanded polyglutamine (polyQ) protein huntingtin (HTT). The chain is F-box only protein 25 (FBXO25) from Homo sapiens (Human).